The chain runs to 151 residues: 3-hydroxyacyl-[acyl-carrier-protein] dehydratase FabZ (151 aa).

His-57 is a catalytic residue.

This sequence belongs to the thioester dehydratase family. FabZ subfamily.

The protein resides in the cytoplasm. The enzyme catalyses a (3R)-hydroxyacyl-[ACP] = a (2E)-enoyl-[ACP] + H2O. Functionally, involved in unsaturated fatty acids biosynthesis. Catalyzes the dehydration of short chain beta-hydroxyacyl-ACPs and long chain saturated and unsaturated beta-hydroxyacyl-ACPs. The chain is 3-hydroxyacyl-[acyl-carrier-protein] dehydratase FabZ from Prochlorococcus marinus (strain SARG / CCMP1375 / SS120).